The sequence spans 204 residues: dITP/XTP pyrophosphatase (204 aa).

8–13 (SNNAHK) is a binding site for substrate. Residues glutamate 41 and aspartate 76 each contribute to the Mg(2+) site. Residue aspartate 76 is the Proton acceptor of the active site. Substrate contacts are provided by residues serine 77, 159–162 (FGYD), lysine 182, and 187–188 (HR).

The protein belongs to the HAM1 NTPase family. In terms of assembly, homodimer. The cofactor is Mg(2+).

It catalyses the reaction XTP + H2O = XMP + diphosphate + H(+). The enzyme catalyses dITP + H2O = dIMP + diphosphate + H(+). The catalysed reaction is ITP + H2O = IMP + diphosphate + H(+). In terms of biological role, pyrophosphatase that catalyzes the hydrolysis of nucleoside triphosphates to their monophosphate derivatives, with a high preference for the non-canonical purine nucleotides XTP (xanthosine triphosphate), dITP (deoxyinosine triphosphate) and ITP. Seems to function as a house-cleaning enzyme that removes non-canonical purine nucleotides from the nucleotide pool, thus preventing their incorporation into DNA/RNA and avoiding chromosomal lesions. The chain is dITP/XTP pyrophosphatase from Clostridium perfringens (strain 13 / Type A).